Here is a 567-residue protein sequence, read N- to C-terminus: Beta-galactoside-specific lectin 2 (567 aa).

The first 33 residues, 1–33 (MNARLASSRAWVWCFLMVGLVCGATAKAESKIN), serve as a signal peptide directing secretion. Residue Asn-145 is glycosylated (N-linked (GlcNAc...) asparagine). Residue Glu-198 is part of the active site. 2 disulfides stabilise this stretch: Cys-280–Cys-306 and Cys-322–Cys-341. A propeptide spans 288–301 (DVHNWPLVIRPVMV) (connecting peptide). The region spanning 309–439 (SEPTVRIVGR…DSLGQSWLAS (131 aa)) is the Ricin B-type lectin 1 domain. 324 to 326 (DVR) is a binding site for D-galactose. An N-linked (GlcNAc...) asparagine glycan is attached at Asn-362. Cysteines 365 and 382 form a disulfide. N-linked (GlcNAc...) asparagine glycosylation is present at Asn-440. Positions 443-566 (APREVTIYGF…GNPNQMWLPV (124 aa)) constitute a Ricin B-type lectin 2 domain. Disulfide bonds link Cys-456–Cys-469 and Cys-495–Cys-512. A D-galactose-binding site is contributed by 539–541 (DVR).

It belongs to the ribosome-inactivating protein family. Type 2 RIP subfamily. As to quaternary structure, disulfide-linked dimer of A and B chains.

It carries out the reaction Endohydrolysis of the N-glycosidic bond at one specific adenosine on the 28S rRNA.. Its function is as follows. The A chain is responsible for inhibiting protein synthesis through the catalytic inactivation of 60S ribosomal subunits by removing adenine from position 4,324 of 28S rRNA. The B chain binds to cell receptors and probably facilitates the entry into the cell of the A chain; B chains are also responsible for cell agglutination (lectin activity). In Viscum album (European mistletoe), this protein is Beta-galactoside-specific lectin 2.